A 144-amino-acid chain; its full sequence is Ribonuclease VapC1 (144 aa).

The region spanning 6 to 132 (VFVDGNVIVD…SFYSPDIEVL (127 aa)) is the PINc domain. Positions 9 and 102 each coordinate Mg(2+).

This sequence belongs to the PINc/VapC protein family. Requires Mg(2+) as cofactor.

Its function is as follows. Toxic component of a type II toxin-antitoxin (TA) system. An RNase. The sequence is that of Ribonuclease VapC1 from Aquifex aeolicus (strain VF5).